The chain runs to 264 residues: ECF RNA polymerase sigma factor BldN (264 aa).

The tract at residues 1 to 87 (MYPHVGVDAS…PAADSDSARM (87 aa)) is not required for transcription in vitro. The disordered stretch occupies residues 64–83 (RSSSSGAAATTHRRPAADSD). The sigma-70 factor domain-2 stretch occupies residues 105 to 172 (LYDQYSDTVY…LVADHFKSSR (68 aa)). Positions 129–132 (DLTS) match the Polymerase core binding motif. Residues 204–255 (ALLDAVRRLNPQQQECVTLRFLQGLSVAETARVMGKNEGAIKTLQYRAVRTL) are sigma-70 factor domain-4.

The protein belongs to the sigma-70 factor family. ECF subfamily. In terms of processing, two forms of protein exist; a 35 kDa form in early growth and a 28 kDa form seen in later stages (at protein level). In liquid culture the larger form accumulates to higher level than on solid media. The shorter form results from processing just upstream of Met-87; the exact position is unknown. There are 4 possible start codons; mutation of the first prevents protein production while mutation of the other 3 (Val-44, Met-87 and Met-88) permits production of both forms. Introduction of stop codons between the first and second, or second and third possible start codons also prevents protein production, corroborating that the annotated start codon is the correct one.

In terms of biological role, sigma factors are initiation factors that promote the attachment of RNA polymerase to specific initiation sites and are then released. Extracytoplasmic function (ECF) sigma factors are usually held in an inactive form by an anti-sigma factor until released. ECF sigma factor involved in aerial mycelium formation, required for translation from the bldMp1 promoter. Expressed as a preprotein; processing and accumulation of the mature protein starts as aerial mycelium formation and sporulation commence. Activates expression of about 17 genes, including those for rdlA and most of the chaplins (chpA to chpH); chaplin activation is indirect. The polypeptide is ECF RNA polymerase sigma factor BldN (Streptomyces coelicolor (strain ATCC BAA-471 / A3(2) / M145)).